A 457-amino-acid chain; its full sequence is Bifunctional protein GlmU (457 aa).

The segment at 1–230 (MSKRYAVVLA…FEESLGVNDR (230 aa)) is pyrophosphorylase. Residues 9-12 (LAAG), Lys-23, Gln-73, and 78-79 (GT) each bind UDP-N-acetyl-alpha-D-glucosamine. Position 103 (Asp-103) interacts with Mg(2+). UDP-N-acetyl-alpha-D-glucosamine contacts are provided by Gly-140, Glu-155, Asn-170, and Asn-228. Asn-228 lines the Mg(2+) pocket. Residues 231–251 (IALAEASKLMQRRINENHMRN) are linker. Positions 252 to 457 (GVTLVNPEST…GYAKHLNHGK (206 aa)) are N-acetyltransferase. UDP-N-acetyl-alpha-D-glucosamine contacts are provided by Arg-333 and Lys-351. The active-site Proton acceptor is the His-363. The UDP-N-acetyl-alpha-D-glucosamine site is built by Tyr-366 and Asn-377. Residues 386-387 (NY), Ala-423, and Arg-440 each bind acetyl-CoA.

It in the N-terminal section; belongs to the N-acetylglucosamine-1-phosphate uridyltransferase family. The protein in the C-terminal section; belongs to the transferase hexapeptide repeat family. Homotrimer. It depends on Mg(2+) as a cofactor.

The protein resides in the cytoplasm. The enzyme catalyses alpha-D-glucosamine 1-phosphate + acetyl-CoA = N-acetyl-alpha-D-glucosamine 1-phosphate + CoA + H(+). The catalysed reaction is N-acetyl-alpha-D-glucosamine 1-phosphate + UTP + H(+) = UDP-N-acetyl-alpha-D-glucosamine + diphosphate. It functions in the pathway nucleotide-sugar biosynthesis; UDP-N-acetyl-alpha-D-glucosamine biosynthesis; N-acetyl-alpha-D-glucosamine 1-phosphate from alpha-D-glucosamine 6-phosphate (route II): step 2/2. Its pathway is nucleotide-sugar biosynthesis; UDP-N-acetyl-alpha-D-glucosamine biosynthesis; UDP-N-acetyl-alpha-D-glucosamine from N-acetyl-alpha-D-glucosamine 1-phosphate: step 1/1. The protein operates within bacterial outer membrane biogenesis; LPS lipid A biosynthesis. Its function is as follows. Catalyzes the last two sequential reactions in the de novo biosynthetic pathway for UDP-N-acetylglucosamine (UDP-GlcNAc). The C-terminal domain catalyzes the transfer of acetyl group from acetyl coenzyme A to glucosamine-1-phosphate (GlcN-1-P) to produce N-acetylglucosamine-1-phosphate (GlcNAc-1-P), which is converted into UDP-GlcNAc by the transfer of uridine 5-monophosphate (from uridine 5-triphosphate), a reaction catalyzed by the N-terminal domain. The protein is Bifunctional protein GlmU of Listeria monocytogenes serotype 4a (strain HCC23).